A 208-amino-acid chain; its full sequence is Holliday junction resolvase RecU (208 aa).

Mg(2+) contacts are provided by Thr87, Asp89, Glu102, and Gln121.

Belongs to the RecU family. Mg(2+) is required as a cofactor.

It is found in the cytoplasm. The enzyme catalyses Endonucleolytic cleavage at a junction such as a reciprocal single-stranded crossover between two homologous DNA duplexes (Holliday junction).. Functionally, endonuclease that resolves Holliday junction intermediates in genetic recombination. Cleaves mobile four-strand junctions by introducing symmetrical nicks in paired strands. Promotes annealing of linear ssDNA with homologous dsDNA. Required for DNA repair, homologous recombination and chromosome segregation. In Staphylococcus aureus (strain MRSA252), this protein is Holliday junction resolvase RecU.